The chain runs to 218 residues: Thiopurine S-methyltransferase (218 aa).

Residues tryptophan 10, leucine 45, glutamate 66, and arginine 123 each coordinate S-adenosyl-L-methionine.

This sequence belongs to the class I-like SAM-binding methyltransferase superfamily. TPMT family.

Its subcellular location is the cytoplasm. The enzyme catalyses S-adenosyl-L-methionine + a thiopurine = S-adenosyl-L-homocysteine + a thiopurine S-methylether.. In Xanthomonas axonopodis pv. citri (strain 306), this protein is Thiopurine S-methyltransferase.